A 221-amino-acid chain; its full sequence is Casparian strip membrane protein 3 (221 aa).

Over residues 1 to 12 (MDIEKAASRREE) the composition is skewed to basic and acidic residues. The segment at 1–28 (MDIEKAASRREEEEPIVQRPKLDKGKGK) is disordered. The Cytoplasmic portion of the chain corresponds to 1 to 58 (MDIEKAASRREEEEPIVQRPKLDKGKGKAHVFAPPMNYNRIMDKHKQEKVSAAGWKRG). Residues 59–79 (VAIFDFVLRLIAAITAMAAAA) traverse the membrane as a helical segment. Residues 80 to 109 (KMATTEETLPFFTQFLQFQAEYTDLPTMSS) are Extracellular-facing. Residues 110–130 (FVIVNSIVGGYLTLSLPFSIV) traverse the membrane as a helical segment. Topologically, residues 131–148 (CILRPLAVPPRLFLIICD) are cytoplasmic. The chain crosses the membrane as a helical span at residues 149–169 (TAMMGLTMMAASASAAIVYLA). At 170-194 (HNGNSSSNWLPVCQQFGDFCQGTSG) the chain is on the extracellular side. N173 carries an N-linked (GlcNAc...) asparagine glycan. The helical transmembrane segment at 195–215 (AVVASFIAATLLMFLVILSAF) threads the bilayer. Topologically, residues 216–221 (ALKRST) are cytoplasmic.

This sequence belongs to the Casparian strip membrane proteins (CASP) family. In terms of assembly, homodimer and heterodimers.

It localises to the cell membrane. Its function is as follows. Regulates membrane-cell wall junctions and localized cell wall deposition. Required for establishment of the Casparian strip membrane domain (CSD) and the subsequent formation of Casparian strips, a cell wall modification of the root endodermis that determines an apoplastic barrier between the intraorganismal apoplasm and the extraorganismal apoplasm and prevents lateral diffusion. The protein is Casparian strip membrane protein 3 of Arabidopsis lyrata subsp. lyrata (Lyre-leaved rock-cress).